Here is an 809-residue protein sequence, read N- to C-terminus: Ecotropic viral integration site 5 protein (809 aa).

Residues 1–483 are interaction with alpha-tubulin, gamma-tubulin, BIRC5 and FBXO5; the sequence is MVTTKMTAAF…EAESQCALKE (483 aa). Disordered regions lie at residues 49–80 and 99–123; these read VASPSASLHTTSSSTTLSTPTQSPSSPSKLSP and DSKSLRSVNGSRRNSGSSLVSSSSA. Over residues 51-78 the composition is skewed to low complexity; that stretch reads SPSASLHTTSSSTTLSTPTQSPSSPSKL. Residues S102 and S113 each carry the phosphoserine modification. Residues 103 to 123 are compositionally biased toward low complexity; it reads LRSVNGSRRNSGSSLVSSSSA. The dimerization stretch occupies residues 128–693; that stretch reads SHLEEDSWIL…LNRSDSNQYI (566 aa). The Rab-GAP TBC domain maps to 163–348; the sequence is GIPHHFRAIV…RIFDIFMSEG (186 aa). The interval 377-809 is targeting to the centrosomes; the sequence is QHFQKVIPHQ…PQRESYSTTV (433 aa). A coiled-coil region spans residues 406–717; that stretch reads KKMKKLEKEY…RCLKGQRDFS (312 aa). An interaction with AURKB and INCENP region spans residues 487–809; it reads KVLDIEKKNN…PQRESYSTTV (323 aa). A phosphoserine mark is found at S497, S689, S776, and S778. Residues 760 to 809 are disordered; it reads HRKSGPMSLNPALADGSESEAEDGMLGPQESDPEAPQKQPPQRESYSTTV. Residues 799 to 809 show a composition bias toward polar residues; the sequence is PPQRESYSTTV.

Dimeric and monomeric. Interacts with alpha- and gamma-tubulin. Interacts with FBXO5. Interacts with the chromosome passenger complex (CPC) which is at least composed of AURKB/aurora-B, BIRC5/survivin, CDCA8/borealin and INCENP. Post-translationally, probably phosphorylated by PLK1; may be required for degradation during mitosis. Ubiquitinated. Degradation during prophase is ubiquitin-dependent. As to expression, widely expressed.

It is found in the nucleus. It localises to the cytoplasm. The protein resides in the cytoskeleton. The protein localises to the microtubule organizing center. Its subcellular location is the centrosome. It is found in the spindle. In terms of biological role, functions as a regulator of cell cycle progression by stabilizing the FBXO5 protein and promoting cyclin-A accumulation during interphase. May play a role in cytokinesis. In Mus musculus (Mouse), this protein is Ecotropic viral integration site 5 protein (Evi5).